We begin with the raw amino-acid sequence, 133 residues long: ATP synthase epsilon chain, chloroplastic (133 aa).

The protein belongs to the ATPase epsilon chain family. F-type ATPases have 2 components, CF(1) - the catalytic core - and CF(0) - the membrane proton channel. CF(1) has five subunits: alpha(3), beta(3), gamma(1), delta(1), epsilon(1). CF(0) has three main subunits: a, b and c.

The protein resides in the plastid. The protein localises to the chloroplast thylakoid membrane. Its function is as follows. Produces ATP from ADP in the presence of a proton gradient across the membrane. This is ATP synthase epsilon chain, chloroplastic from Ipomoea batatas (Sweet potato).